The sequence spans 569 residues: Proline--tRNA ligase (569 aa).

The protein belongs to the class-II aminoacyl-tRNA synthetase family. ProS type 1 subfamily. In terms of assembly, homodimer.

Its subcellular location is the cytoplasm. The enzyme catalyses tRNA(Pro) + L-proline + ATP = L-prolyl-tRNA(Pro) + AMP + diphosphate. Functionally, catalyzes the attachment of proline to tRNA(Pro) in a two-step reaction: proline is first activated by ATP to form Pro-AMP and then transferred to the acceptor end of tRNA(Pro). As ProRS can inadvertently accommodate and process non-cognate amino acids such as alanine and cysteine, to avoid such errors it has two additional distinct editing activities against alanine. One activity is designated as 'pretransfer' editing and involves the tRNA(Pro)-independent hydrolysis of activated Ala-AMP. The other activity is designated 'posttransfer' editing and involves deacylation of mischarged Ala-tRNA(Pro). The misacylated Cys-tRNA(Pro) is not edited by ProRS. In Colwellia psychrerythraea (strain 34H / ATCC BAA-681) (Vibrio psychroerythus), this protein is Proline--tRNA ligase.